The primary structure comprises 337 residues: MGIRENGIMLVSRERERARRLENRESIFAEPPCLLLAHRISPSPSILPAEEEVMDVSARKSQKAGREKLRREKLNEHFVELGNVLDPERPKNDKATILTDTVQLLKELTSEVNKLKSEYTALTDESRELTQEKNDLREEKTSLKSDIENLNLQYQQRLRSMSPWGAAMDHTVMMAPPPSFPYPMPIAMPPGSIPMHPSMPSYTYFGNQNPSMIPAPCPTYMPYMPPNTVVEQQSVHIPQNPGNRSREPRAKVSRESRSEKAEDSNEVATQLELKTPGSTSDKDTLQRPEKTKRCKRNNNNNSIEESSHSSKCSSSPSVRDHSSSSSVAGGQKPDDAK.

In terms of domain architecture, bHLH spans 58–108 (ARKSQKAGREKLRREKLNEHFVELGNVLDPERPKNDKATILTDTVQLLKEL). Positions 235–337 (VHIPQNPGNR…AGGQKPDDAK (103 aa)) are disordered. Composition is skewed to basic and acidic residues over residues 244 to 263 (RSREPRAKVSRESRSEKAED) and 280 to 291 (SDKDTLQRPEKT). Residues 297-317 (NNNNNSIEESSHSSKCSSSPS) are compositionally biased toward low complexity.

In terms of assembly, homodimer. As to expression, expressed constitutively in roots, leaves, stems, and flowers.

The protein localises to the nucleus. This chain is Transcription factor bHLH121 (BHLH121), found in Arabidopsis thaliana (Mouse-ear cress).